The chain runs to 385 residues: AA13 family lytic polysaccharide monooxygenase NCU08746 (385 aa).

The N-terminal stretch at 1-18 is a signal peptide; sequence MKFSIISVALASAITVDA. Position 19 (H19) interacts with Cu(2+). H19 is modified (methylhistidine). The 230-residue stretch at 19–248 folds into the Chitin-binding type-4 domain; that stretch reads HGYLTIPFSR…AQVYLSCADI (230 aa). Residues C40 and C43 are joined by a disulfide bond. An N-linked (GlcNAc...) asparagine glycan is attached at N54. 6 disulfide bridges follow: C66-C245, C102-C203, C118-C145, C153-C161, C167-C173, and C181-C192. H109 contributes to the Cu(2+) binding site. Residue Y242 coordinates Cu(2+). The 108-residue stretch at 278–385 folds into the CBM20 domain; sequence CTPAATVAVT…ESVAVESSWK (108 aa). N365 is a glycosylation site (N-linked (GlcNAc...) asparagine).

The protein belongs to the polysaccharide monooxygenase AA13 family. The cofactor is Cu(2+).

The protein resides in the secreted. It carries out the reaction starch + reduced acceptor + O2 = D-glucono-1,5-lactone-terminated malto-oligosaccharides + short-chain malto-oligosaccharides + acceptor + H2O.. In terms of biological role, starch-active lytic polysaccharide monooxygenase that oxidizes the C1 position of starch substrates, but not in cellulose or chitin. Catalysis by LPMOs requires the reduction of the active-site copper from Cu(II) to Cu(I) by a reducing agent and H(2)O(2) or O(2) as a cosubstrate. The protein is AA13 family lytic polysaccharide monooxygenase NCU08746 of Neurospora crassa (strain ATCC 24698 / 74-OR23-1A / CBS 708.71 / DSM 1257 / FGSC 987).